The following is a 1654-amino-acid chain: Mediator of RNA polymerase II transcription subunit 12 (1654 aa).

Disordered regions lie at residues 52–72 and 1481–1530; these read DLNG…LSGN and SKQT…SFQT. Residues 1515–1530 are compositionally biased toward polar residues; that stretch reads PLSSARPSSEAASFQT.

Belongs to the Mediator complex subunit 12 family. In terms of assembly, component of the SRB8-11 complex, which itself associates with the Mediator complex.

Its subcellular location is the nucleus. In terms of biological role, component of the SRB8-11 complex. The SRB8-11 complex is a regulatory module of the Mediator complex which is itself involved in regulation of basal and activated RNA polymerase II-dependent transcription. The SRB8-11 complex may be involved in the transcriptional repression of a subset of genes regulated by Mediator. It may inhibit the association of the Mediator complex with RNA polymerase II to form the holoenzyme complex. The sequence is that of Mediator of RNA polymerase II transcription subunit 12 (SRB8) from Scheffersomyces stipitis (strain ATCC 58785 / CBS 6054 / NBRC 10063 / NRRL Y-11545) (Yeast).